Here is a 454-residue protein sequence, read N- to C-terminus: T-box protein VegT (454 aa).

Positions 57-230 (LWSQFHQEGT…HNPFAKGFRE (174 aa)) form a DNA-binding region, T-box. A compositionally biased stretch (basic and acidic residues) spans 229 to 241 (REQERSHKRDDVL). Disordered stretches follow at residues 229-274 (REQE…ATRV) and 295-358 (ANQG…VPDS). Residues 308–325 (GVNQEQQVPTSSLNFYNK) are compositionally biased toward polar residues.

Forms a repression complex on the promoters of the nodal/nr1 and siamois genes with the maternal factors tcf7l1/tcf3 and pouf5.1/oct-25. Interacts (via C-terminus) with tcf7l1/tcf3 (via N-terminus). Also interacts with the other POU-domain transcription factors pou5f1.2/oct-91 and pou5f1.3/oct-60.

It localises to the nucleus. In terms of biological role, transcription factor required for both mesoderm and endoderm formation in the embryo; signaling determinants and concentration levels may determine which germ layer is formed. Acts together with beta-catenin to activate genes that are responsible for mesoderm induction including wnt-8, eomes t/bra, siamois, mix1 and sox17. Directly binds to promoter DNA. Patterns the mesoderm along the dorsoventral and posterior axis. Activates siamois gene transcription when alone or in combination with beta-catenin, but inhibits siamois transcription in combination with pou5f1.1/oct-25. The chain is T-box protein VegT from Xenopus borealis (Kenyan clawed frog).